We begin with the raw amino-acid sequence, 98 residues long: Defensin-B (98 aa).

Residues 1–20 (MKSITVICFLALCTVAITSA) form the signal peptide. Positions 21–58 (YPQEPVLADEARPFANSLFDELPEETYQAAVENFRLKR) are excised as a propeptide. 3 cysteine pairs are disulfide-bonded: C61–C88, C74–C94, and C78–C96.

This sequence belongs to the invertebrate defensin family. Type 1 subfamily.

Its subcellular location is the secreted. In terms of biological role, antibacterial peptide mostly active against Gram-positive bacteria. The protein is Defensin-B (DEFB) of Aedes aegypti (Yellowfever mosquito).